We begin with the raw amino-acid sequence, 601 residues long: NADH-ubiquinone oxidoreductase chain 5 (601 aa).

15 helical membrane passes run 3–23, 36–56, 84–104, 114–134, 140–160, 171–191, 201–221, 240–260, 272–292, 324–346, 365–385, 404–426, 456–476, 483–503, and 581–601; these read LIMP…MMSY, VTSS…MFLL, FFSI…MEFS, INQF…LVTA, LFIG…WWYG, AILY…WLLL, IFML…AAAG, TPVS…FLLV, ILTM…ICAL, AFLH…GSII, MPFT…MPFL, NAWA…TRLI, LALG…PLIT, LYMK…AMGL, and LIKL…MLII.

The protein belongs to the complex I subunit 5 family.

It localises to the mitochondrion inner membrane. The catalysed reaction is a ubiquinone + NADH + 5 H(+)(in) = a ubiquinol + NAD(+) + 4 H(+)(out). Its function is as follows. Core subunit of the mitochondrial membrane respiratory chain NADH dehydrogenase (Complex I) that is believed to belong to the minimal assembly required for catalysis. Complex I functions in the transfer of electrons from NADH to the respiratory chain. The immediate electron acceptor for the enzyme is believed to be ubiquinone. This Dasypus novemcinctus (Nine-banded armadillo) protein is NADH-ubiquinone oxidoreductase chain 5 (MT-ND5).